A 235-amino-acid chain; its full sequence is 2-C-methyl-D-erythritol 4-phosphate cytidylyltransferase (235 aa).

It belongs to the IspD/TarI cytidylyltransferase family. IspD subfamily.

The catalysed reaction is 2-C-methyl-D-erythritol 4-phosphate + CTP + H(+) = 4-CDP-2-C-methyl-D-erythritol + diphosphate. The protein operates within isoprenoid biosynthesis; isopentenyl diphosphate biosynthesis via DXP pathway; isopentenyl diphosphate from 1-deoxy-D-xylulose 5-phosphate: step 2/6. Catalyzes the formation of 4-diphosphocytidyl-2-C-methyl-D-erythritol from CTP and 2-C-methyl-D-erythritol 4-phosphate (MEP). This is 2-C-methyl-D-erythritol 4-phosphate cytidylyltransferase from Pseudomonas putida (strain W619).